The following is a 374-amino-acid chain: Pectate lyase 3 (374 aa).

A signal peptide spans 1–22 (MKYLLPSTAAGLLLLAAQPTMA). Cysteine 93 and cysteine 176 are oxidised to a cystine. Ca(2+) contacts are provided by aspartate 150, aspartate 152, glutamate 187, and aspartate 191. Arginine 239 is an active-site residue. Cysteine 350 and cysteine 373 are oxidised to a cystine.

It belongs to the polysaccharide lyase 1 family. PLADES subfamily. The cofactor is Ca(2+).

The protein localises to the secreted. The enzyme catalyses Eliminative cleavage of (1-&gt;4)-alpha-D-galacturonan to give oligosaccharides with 4-deoxy-alpha-D-galact-4-enuronosyl groups at their non-reducing ends.. It functions in the pathway glycan metabolism; pectin degradation; 2-dehydro-3-deoxy-D-gluconate from pectin: step 2/5. Involved in maceration and soft-rotting of plant tissue. The sequence is that of Pectate lyase 3 (pel3) from Pectobacterium atrosepticum (strain SCRI 1043 / ATCC BAA-672) (Erwinia carotovora subsp. atroseptica).